Reading from the N-terminus, the 337-residue chain is Holliday junction branch migration complex subunit RuvB (337 aa).

Residues 1 to 179 (MTHQVSVLHQ…FSFSGRVSYY (179 aa)) form a large ATPase domain (RuvB-L) region. Residues leucine 18, arginine 19, glycine 60, lysine 63, threonine 64, serine 65, 126-128 (EDY), arginine 169, tyrosine 179, and arginine 216 contribute to the ATP site. Threonine 64 is a Mg(2+) binding site. Positions 180–250 (SDEDLATILK…VAEKALSMLL (71 aa)) are small ATPAse domain (RuvB-S). Residues 253–337 (DWGLNEIDIK…DNLQILGEEK (85 aa)) are head domain (RuvB-H). 2 residues coordinate DNA: lysine 308 and arginine 313.

Belongs to the RuvB family. Homohexamer. Forms an RuvA(8)-RuvB(12)-Holliday junction (HJ) complex. HJ DNA is sandwiched between 2 RuvA tetramers; dsDNA enters through RuvA and exits via RuvB. An RuvB hexamer assembles on each DNA strand where it exits the tetramer. Each RuvB hexamer is contacted by two RuvA subunits (via domain III) on 2 adjacent RuvB subunits; this complex drives branch migration. In the full resolvosome a probable DNA-RuvA(4)-RuvB(12)-RuvC(2) complex forms which resolves the HJ.

The protein localises to the cytoplasm. It carries out the reaction ATP + H2O = ADP + phosphate + H(+). In terms of biological role, the RuvA-RuvB-RuvC complex processes Holliday junction (HJ) DNA during genetic recombination and DNA repair, while the RuvA-RuvB complex plays an important role in the rescue of blocked DNA replication forks via replication fork reversal (RFR). RuvA specifically binds to HJ cruciform DNA, conferring on it an open structure. The RuvB hexamer acts as an ATP-dependent pump, pulling dsDNA into and through the RuvAB complex. RuvB forms 2 homohexamers on either side of HJ DNA bound by 1 or 2 RuvA tetramers; 4 subunits per hexamer contact DNA at a time. Coordinated motions by a converter formed by DNA-disengaged RuvB subunits stimulates ATP hydrolysis and nucleotide exchange. Immobilization of the converter enables RuvB to convert the ATP-contained energy into a lever motion, pulling 2 nucleotides of DNA out of the RuvA tetramer per ATP hydrolyzed, thus driving DNA branch migration. The RuvB motors rotate together with the DNA substrate, which together with the progressing nucleotide cycle form the mechanistic basis for DNA recombination by continuous HJ branch migration. Branch migration allows RuvC to scan DNA until it finds its consensus sequence, where it cleaves and resolves cruciform DNA. This chain is Holliday junction branch migration complex subunit RuvB, found in Chlamydia felis (strain Fe/C-56) (Chlamydophila felis).